The sequence spans 249 residues: tRNA pseudouridine synthase A (249 aa).

The active-site Nucleophile is aspartate 53. A substrate-binding site is contributed by tyrosine 111.

It belongs to the tRNA pseudouridine synthase TruA family. In terms of assembly, homodimer.

The catalysed reaction is uridine(38/39/40) in tRNA = pseudouridine(38/39/40) in tRNA. In terms of biological role, formation of pseudouridine at positions 38, 39 and 40 in the anticodon stem and loop of transfer RNAs. This chain is tRNA pseudouridine synthase A, found in Streptococcus pneumoniae (strain Taiwan19F-14).